Here is a 232-residue protein sequence, read N- to C-terminus: 2,3,4,5-tetrahydropyridine-2,6-dicarboxylate N-acetyltransferase (232 aa).

This sequence belongs to the transferase hexapeptide repeat family. DapH subfamily.

It catalyses the reaction (S)-2,3,4,5-tetrahydrodipicolinate + acetyl-CoA + H2O = L-2-acetamido-6-oxoheptanedioate + CoA. Its pathway is amino-acid biosynthesis; L-lysine biosynthesis via DAP pathway; LL-2,6-diaminopimelate from (S)-tetrahydrodipicolinate (acetylase route): step 1/3. Catalyzes the transfer of an acetyl group from acetyl-CoA to tetrahydrodipicolinate. This is 2,3,4,5-tetrahydropyridine-2,6-dicarboxylate N-acetyltransferase from Streptococcus mutans serotype c (strain ATCC 700610 / UA159).